Consider the following 509-residue polypeptide: tRNA-2-methylthio-N(6)-dimethylallyladenosine synthase (509 aa).

Residues 1 to 15 (MNEQQRLASQQVNSS) are compositionally biased toward polar residues. Positions 1–23 (MNEQQRLASQQVNSSTKKEEKDY) are disordered. The MTTase N-terminal domain occupies 66-184 (RKFYIRTYGC…LPYILKDAMF (119 aa)). [4Fe-4S] cluster contacts are provided by C75, C111, C145, C221, C225, and C228. A Radical SAM core domain is found at 207–437 (RRGDIKAWVN…NALVNKLAIE (231 aa)). Residues 440–503 (DRYKGQIVEV…TWSLNGELVE (64 aa)) enclose the TRAM domain.

It belongs to the methylthiotransferase family. MiaB subfamily. Monomer. [4Fe-4S] cluster serves as cofactor.

It localises to the cytoplasm. The enzyme catalyses N(6)-dimethylallyladenosine(37) in tRNA + (sulfur carrier)-SH + AH2 + 2 S-adenosyl-L-methionine = 2-methylsulfanyl-N(6)-dimethylallyladenosine(37) in tRNA + (sulfur carrier)-H + 5'-deoxyadenosine + L-methionine + A + S-adenosyl-L-homocysteine + 2 H(+). Its function is as follows. Catalyzes the methylthiolation of N6-(dimethylallyl)adenosine (i(6)A), leading to the formation of 2-methylthio-N6-(dimethylallyl)adenosine (ms(2)i(6)A) at position 37 in tRNAs that read codons beginning with uridine. The protein is tRNA-2-methylthio-N(6)-dimethylallyladenosine synthase of Bacillus anthracis.